The chain runs to 287 residues: Large ribosomal subunit protein uL2 (287 aa).

Positions 203–287 are disordered; that stretch reads LSAGKAGRNR…SKRGRGGRES (85 aa). Basic residues-rich tracts occupy residues 209–220 and 258–287; these read GRNRWKGRRPKV and KTRK…GRES.

This sequence belongs to the universal ribosomal protein uL2 family. As to quaternary structure, part of the 50S ribosomal subunit. Forms a bridge to the 30S subunit in the 70S ribosome.

Its function is as follows. One of the primary rRNA binding proteins. Required for association of the 30S and 50S subunits to form the 70S ribosome, for tRNA binding and peptide bond formation. It has been suggested to have peptidyltransferase activity; this is somewhat controversial. Makes several contacts with the 16S rRNA in the 70S ribosome. The polypeptide is Large ribosomal subunit protein uL2 (Nostoc sp. (strain PCC 7120 / SAG 25.82 / UTEX 2576)).